The sequence spans 207 residues: MATTIKLEGEARSEFGKGVARRLRVANKIPATIYAGGEEPAFVTLPMRETTLALRHTNALFTIAFDGNTKMAVVKDVQKNPVKRIIEHIDFLEVKAGEKIDVEVPVFVEGTPKGAAVAFVDIQELKVRADVTNLPEKIVVSVEGLTDGTKVFAKDVVLPEGVELDIEDPEESVVTVEVPEDATESTTAPEAAAAPADAAAAPAADAK.

Residues 171–207 form a disordered region; the sequence is ESVVTVEVPEDATESTTAPEAAAAPADAAAAPAADAK. The segment covering 184-207 has biased composition (low complexity); sequence ESTTAPEAAAAPADAAAAPAADAK.

Belongs to the bacterial ribosomal protein bL25 family. CTC subfamily. As to quaternary structure, part of the 50S ribosomal subunit; part of the 5S rRNA/L5/L18/L25 subcomplex. Contacts the 5S rRNA. Binds to the 5S rRNA independently of L5 and L18.

This is one of the proteins that binds to the 5S RNA in the ribosome where it forms part of the central protuberance. The chain is Large ribosomal subunit protein bL25 from Bifidobacterium longum subsp. infantis (strain ATCC 15697 / DSM 20088 / JCM 1222 / NCTC 11817 / S12).